The primary structure comprises 83 residues: MALKREIQGVVLQKAGDKTATILVERRVMHPRYHKFVKRFKKYLVHDEKNETRAGDTVVAVECRPLSARKNFRLKAVLAKGVE.

The protein belongs to the universal ribosomal protein uS17 family. In terms of assembly, part of the 30S ribosomal subunit.

One of the primary rRNA binding proteins, it binds specifically to the 5'-end of 16S ribosomal RNA. This is Small ribosomal subunit protein uS17 from Campylobacter concisus (strain 13826).